The primary structure comprises 82 residues: MEKLIILLLVASLLVTTDSVVKGKKAARGWLFNEVETCELGGLGDPCSGSGDCCCDQCLCSGSYEHCTQNPDRWFCCRTYGN.

Positions 1-19 are cleaved as a signal peptide; it reads MEKLIILLLVASLLVTTDS.

In terms of processing, may contain 5 disulfide bonds. In terms of tissue distribution, expressed by the venom duct.

The protein localises to the secreted. Functionally, probable neurotoxin. This is Conotoxin Cal30 from Californiconus californicus (California cone).